A 65-amino-acid chain; its full sequence is Large ribosomal subunit protein bL35 (65 aa).

This sequence belongs to the bacterial ribosomal protein bL35 family.

The polypeptide is Large ribosomal subunit protein bL35 (Buchnera aphidicola subsp. Cinara cedri (strain Cc)).